Consider the following 270-residue polypeptide: MTPKVFYISDGTAITAEVFGHAVLSQFPIEFEALTIPFVETIQKAQKVKQQINDCFITTGERPLVFHSIINPEIRNVIFSSECVDYDFLNTFVAPLEQHLGVQAKPLLHRTHGKSNHGYETRIDAINYTMENDDGQTMKHMDKADIILLGVSRCGKTPSSLYLSMQFGIKAANYPFTEEDMDNLKLPEALKRNKSKLFGLTIDPHRLHEIRQSRMENSRYSSLRQCRLEVKEVEMLYKKERIPFVNTTNHSVEEIATKILDITGLERHMF.

150-157 (GVSRCGKT) lines the ADP pocket.

The protein belongs to the pyruvate, phosphate/water dikinase regulatory protein family. PSRP subfamily.

It carries out the reaction [pyruvate, water dikinase] + ADP = [pyruvate, water dikinase]-phosphate + AMP + H(+). The enzyme catalyses [pyruvate, water dikinase]-phosphate + phosphate + H(+) = [pyruvate, water dikinase] + diphosphate. Functionally, bifunctional serine/threonine kinase and phosphorylase involved in the regulation of the phosphoenolpyruvate synthase (PEPS) by catalyzing its phosphorylation/dephosphorylation. The protein is Putative phosphoenolpyruvate synthase regulatory protein of Shewanella frigidimarina (strain NCIMB 400).